The following is a 689-amino-acid chain: FACT complex subunit ssrp1-B (689 aa).

2 disordered regions span residues 434–565 (DNKS…KRAT) and 592–689 (KAGA…GESD). A compositionally biased stretch (acidic residues) spans 461–477 (EQDDDSDDESTDEDYDL). 4 stretches are compositionally biased toward basic and acidic residues: residues 478–491 (DKDMKKQKNDKDSS), 523–532 (IEPKKKESKE), 538–563 (EKKEKPVKEKAVKKGKKTKDPNEPKR), and 601–628 (SADDKKEWNDKAAQDKARYEAEMKEYKK). Positions 561–627 (PKRATTAYII…RYEAEMKEYK (67 aa)) form a DNA-binding region, HMG box. A compositionally biased stretch (polar residues) spans 638–650 (GPSTKKSSDQSPG).

Belongs to the SSRP1 family. Component of the FACT complex, a stable heterodimer of hmg-3 and spt-16. The FACT complex may also include hmg-4 instead of hmg-3. As to expression, expressed in the germline.

It is found in the nucleus. The protein resides in the chromosome. Functionally, component of the FACT complex, a general chromatin factor that acts to reorganize nucleosomes. The FACT complex is involved in multiple processes that require DNA as a template such as mRNA elongation, DNA replication and DNA repair. During transcription elongation the FACT complex acts as a histone chaperone that both destabilizes and restores nucleosomal structure. It facilitates the passage of RNA polymerase II and transcription by promoting the dissociation of one histone H2A-H2B dimer from the nucleosome, then subsequently promotes the reestablishment of the nucleosome following the passage of RNA polymerase II. Binds specifically to double-stranded DNA. In embryos, may function redundantly with hmg-4 to promote cell cycle progression and development of the anterior pharynx. In the germline, acts non-redundantly with hmg-4 to play a role in oocyte development. The protein is FACT complex subunit ssrp1-B of Caenorhabditis elegans.